The following is a 395-amino-acid chain: MEKLNPYFGQFGGMFVPQILVPALKQLEAEFVRAQTDPEFLAELSELLTEYAGRPTPLTLCRNLTKGKKTKLYLKREDLLHGGAHKTNQVLGQALLAKRMGKKEIIAETGAGQHGVAAALACALLGLKCRVYMGAVDCERQKPNVFRMRLMGAEVIPVHSGSSTLKDACNEALRDWAGSYDTAHYLLGTVAGPHPFPTIVREFQKIIGEEAKQQVLKKEGVLPDKVIACVGGGSNAIGIFNDFIDDPSVELIGVEPGGRGIETGKHGCPITYGSKGIFFGMHSLMMQDKHGQVKESYSISAGLDFPSVGPQHAHLAETGRAQYVYATDDEALDAFHELSLKEGIIPALESAHALAHALKLIKHDDKEQIIIVNLSGRGDKDIFTVAEIFEERGIL.

N6-(pyridoxal phosphate)lysine is present on Lys-86.

This sequence belongs to the TrpB family. Tetramer of two alpha and two beta chains. Pyridoxal 5'-phosphate is required as a cofactor.

The enzyme catalyses (1S,2R)-1-C-(indol-3-yl)glycerol 3-phosphate + L-serine = D-glyceraldehyde 3-phosphate + L-tryptophan + H2O. It functions in the pathway amino-acid biosynthesis; L-tryptophan biosynthesis; L-tryptophan from chorismate: step 5/5. Functionally, the beta subunit is responsible for the synthesis of L-tryptophan from indole and L-serine. The protein is Tryptophan synthase beta chain of Psychromonas ingrahamii (strain DSM 17664 / CCUG 51855 / 37).